A 64-amino-acid polypeptide reads, in one-letter code: MTKITIVKCPQCGTNVEWGEQSPHRPFCSKKCQMIDFGEWADEENAIPGAPDMSDSDGWSEEQY.

Positions 9, 12, 28, and 32 each coordinate Zn(2+). Positions 42–64 (DEENAIPGAPDMSDSDGWSEEQY) are disordered. A compositionally biased stretch (acidic residues) spans 54 to 64 (SDSDGWSEEQY).

It belongs to the DNA gyrase inhibitor YacG family. Interacts with GyrB. Requires Zn(2+) as cofactor.

Inhibits all the catalytic activities of DNA gyrase by preventing its interaction with DNA. Acts by binding directly to the C-terminal domain of GyrB, which probably disrupts DNA binding by the gyrase. In Vibrio vulnificus (strain CMCP6), this protein is DNA gyrase inhibitor YacG.